We begin with the raw amino-acid sequence, 947 residues long: Microtubule cross-linking factor 3 (947 aa).

An N-terminal signal peptide occupies residues 1–21 (MSQPPIGGAAPATAAASPAAA). Disordered regions lie at residues 1–251 (MSQP…SYWK), 266–368 (KERA…TLKN), and 496–524 (LSLKRRGSKDLPKSEKKAQQTPTEEDNED). Low complexity-rich tracts occupy residues 9–24 (AAPATAAASPAAAATE), 72–81 (QQQLQQQQQQ), and 109–137 (APKGAAPGAVQPVAGAEAAPAATLAALGG). Over residues 141-151 (GPPEEPPRELE) the composition is skewed to basic and acidic residues. Positions 164–180 (GEGGGGGGEGGGAGGGS) are enriched in gly residues. The span at 214 to 236 (ASPSPSSSSAGKTPGTGSRNSGS) shows a compositional bias: low complexity. Residues 237-248 (GVAGGGSGGGGS) are compositionally biased toward gly residues. Composition is skewed to low complexity over residues 287-297 (SSRSSPVSGPP) and 304-325 (AVASASPMAAAAEGPQQSAEGS). The stretch at 342 to 726 (HPQQLQEQEE…GKVMQLQYEN (385 aa)) forms a coiled coil. Composition is skewed to basic and acidic residues over residues 355–368 (EMEKLREENETLKN) and 496–513 (LSLKRRGSKDLPKSEKKA). At Ser569 the chain carries Phosphoserine. The segment at 743 to 786 (GIRGSPRDSDAESDAGKKESDDDSRPPHRKREGPIGGESDSEEV) is disordered. Residues 747–768 (SPRDSDAESDAGKKESDDDSRP) show a composition bias toward basic and acidic residues. Ser781 carries the phosphoserine modification. Residues 811–835 (DRQQMKDIRSEAERLGKTIDRLIAD) adopt a coiled-coil conformation. A helical membrane pass occupies residues 915 to 935 (PIILLILILVLFSSLSYTTIF).

The protein belongs to the MTCL family.

Its subcellular location is the membrane. This is Microtubule cross-linking factor 3 from Homo sapiens (Human).